The sequence spans 587 residues: MTSSIECKNFLRSLQLLNLLIKIGVQNLIVCPGSRSAPLAIAAGELNKLGLVNIFNSIDERSAGFHSLGISAASGNLSLVITTSGTAVSNLLPAAVEADRSCKGIIFLTADRPLRLKDCGANQTVNQEDFLSSVCRRVLSTNLNGLHETQENEILNLVQITEKQISTFPGPIHLNIPIDKPLGISFLNKKNVLEVFERIYLKKKYVFQEVEIKSNKNKFLEILENLNLDESGIILVGPYQGSINELSSFNKSLEKLQAITGWPVFADPVSCVYSDLRGLVVNWELVLRKNKNLINCHQLLRLGPMSSSIDLEDFLTTFEGIQILIKEKNYRKLDPIKKSFEYDFGLLNFITLLLAELSINKINTKSLTPLAIDLMEEGEQIKKILKEKITNDNQITEYKLANLVPKLWPAENPIMLSASSPIRDWLTFSENGTLTRNCFSFRGASGIDGTLSLALGISRIKNPLLLVTGDLAFVHDLNGWLIENSIDLNLTILLINNNGGNIFNRLYKDNLKEDELKKLFLMPKEINWKKLAEGYQVNFKSVTNFKKLREAFEWSISIRESVIIKVDIDPENEISDKNALLEKIIGS.

Belongs to the TPP enzyme family. MenD subfamily. As to quaternary structure, homodimer. The cofactor is Mg(2+). Mn(2+) serves as cofactor. Thiamine diphosphate is required as a cofactor.

The enzyme catalyses isochorismate + 2-oxoglutarate + H(+) = 5-enolpyruvoyl-6-hydroxy-2-succinyl-cyclohex-3-ene-1-carboxylate + CO2. It participates in quinol/quinone metabolism; 1,4-dihydroxy-2-naphthoate biosynthesis; 1,4-dihydroxy-2-naphthoate from chorismate: step 2/7. Its pathway is cofactor biosynthesis; phylloquinone biosynthesis. Functionally, catalyzes the thiamine diphosphate-dependent decarboxylation of 2-oxoglutarate and the subsequent addition of the resulting succinic semialdehyde-thiamine pyrophosphate anion to isochorismate to yield 2-succinyl-5-enolpyruvyl-6-hydroxy-3-cyclohexene-1-carboxylate (SEPHCHC). This Prochlorococcus marinus (strain MIT 9312) protein is 2-succinyl-5-enolpyruvyl-6-hydroxy-3-cyclohexene-1-carboxylate synthase.